The primary structure comprises 120 residues: Phosphoribosyl-ATP pyrophosphatase (120 aa).

It belongs to the PRA-PH family.

Its subcellular location is the cytoplasm. It catalyses the reaction 1-(5-phospho-beta-D-ribosyl)-ATP + H2O = 1-(5-phospho-beta-D-ribosyl)-5'-AMP + diphosphate + H(+). It functions in the pathway amino-acid biosynthesis; L-histidine biosynthesis; L-histidine from 5-phospho-alpha-D-ribose 1-diphosphate: step 2/9. This Methylibium petroleiphilum (strain ATCC BAA-1232 / LMG 22953 / PM1) protein is Phosphoribosyl-ATP pyrophosphatase.